A 23-amino-acid polypeptide reads, in one-letter code: Glutamine synthetase (23 aa).

Belongs to the glutamine synthetase family. In terms of assembly, oligomer of 12 subunits arranged in the form of two hexagons. It depends on Mg(2+) as a cofactor.

Its subcellular location is the cytoplasm. It carries out the reaction L-glutamate + NH4(+) + ATP = L-glutamine + ADP + phosphate + H(+). With respect to regulation, the activity of this enzyme could be controlled by adenylation under conditions of abundant glutamine. In terms of biological role, involved in nitrogen metabolism via ammonium assimilation. Catalyzes the ATP-dependent biosynthesis of glutamine from glutamate and ammonia. The protein is Glutamine synthetase of Phormidium lapideum.